The sequence spans 386 residues: Protein phosphatase methylesterase 1 (386 aa).

Residues 1–38 are disordered; it reads MSALEKSMHLGRLPSRPPLPGSGGSQSGAKMRMGPGRK. At Ser-15 the chain carries Phosphoserine. Arg-16 bears the Asymmetric dimethylarginine; alternate mark. Arg-16 is subject to Omega-N-methylarginine; alternate. Residue Ser-42 is modified to Phosphoserine. Ser-156 is an active-site residue. Over residues 254 to 265 the composition is skewed to acidic residues; sequence IIEEEEEDEEGS. Residues 254-280 form a disordered region; it reads IIEEEEEDEEGSESISKRKKEDDMETK. The span at 268–280 shows a compositional bias: basic and acidic residues; sequence ISKRKKEDDMETK. His-349 is a catalytic residue.

The protein belongs to the AB hydrolase superfamily. In terms of assembly, binds PPP2CA and PPP2CB. In terms of processing, phosphorylated by SIK1 following increases in intracellular sodium, leading to dissociation from the protein phosphatase 2A (PP2A) complex and subsequent dephosphorylation of sodium/potassium-transporting ATPase ATP1A1.

It carries out the reaction [phosphatase 2A protein]-C-terminal L-leucine methyl ester + H2O = [phosphatase 2A protein]-C-terminal L-leucine + methanol + H(+). Demethylates proteins that have been reversibly carboxymethylated. Demethylates PPP2CB (in vitro) and PPP2CA. Binding to PPP2CA displaces the manganese ion and inactivates the enzyme. This Pongo abelii (Sumatran orangutan) protein is Protein phosphatase methylesterase 1 (PPME1).